Consider the following 545-residue polypeptide: CTP synthase (545 aa).

The interval 1–266 is amidoligase domain; sequence MATNYIFVTG…DDFVCERFRL (266 aa). Ser14 lines the CTP pocket. A UTP-binding site is contributed by Ser14. Residues 15-20 and Asp72 contribute to the ATP site; that span reads SLGKGI. Positions 72 and 140 each coordinate Mg(2+). Residues 147-149, 187-192, and Lys223 contribute to the CTP site; these read DIE and KTKPTQ. UTP contacts are provided by residues 187–192 and Lys223; that span reads KTKPTQ. An ATP-binding site is contributed by 239–241; it reads KDV. The Glutamine amidotransferase type-1 domain occupies 291 to 542; that stretch reads TIGMVGKYTE…VKAAYENHKK (252 aa). An L-glutamine-binding site is contributed by Gly352. Catalysis depends on Cys379, which acts as the Nucleophile; for glutamine hydrolysis. L-glutamine contacts are provided by residues 380-383, Glu403, and Arg470; that span reads LGMQ. Residues His515 and Glu517 contribute to the active site.

Belongs to the CTP synthase family. In terms of assembly, homotetramer.

It carries out the reaction UTP + L-glutamine + ATP + H2O = CTP + L-glutamate + ADP + phosphate + 2 H(+). It catalyses the reaction L-glutamine + H2O = L-glutamate + NH4(+). The catalysed reaction is UTP + NH4(+) + ATP = CTP + ADP + phosphate + 2 H(+). It functions in the pathway pyrimidine metabolism; CTP biosynthesis via de novo pathway; CTP from UDP: step 2/2. Allosterically activated by GTP, when glutamine is the substrate; GTP has no effect on the reaction when ammonia is the substrate. The allosteric effector GTP functions by stabilizing the protein conformation that binds the tetrahedral intermediate(s) formed during glutamine hydrolysis. Inhibited by the product CTP, via allosteric rather than competitive inhibition. Catalyzes the ATP-dependent amination of UTP to CTP with either L-glutamine or ammonia as the source of nitrogen. Regulates intracellular CTP levels through interactions with the four ribonucleotide triphosphates. This Haemophilus influenzae (strain PittEE) protein is CTP synthase.